The chain runs to 327 residues: Phenylalanine--tRNA ligase alpha subunit (327 aa).

E252 provides a ligand contact to Mg(2+).

The protein belongs to the class-II aminoacyl-tRNA synthetase family. Phe-tRNA synthetase alpha subunit type 1 subfamily. In terms of assembly, tetramer of two alpha and two beta subunits. Mg(2+) serves as cofactor.

The protein localises to the cytoplasm. It catalyses the reaction tRNA(Phe) + L-phenylalanine + ATP = L-phenylalanyl-tRNA(Phe) + AMP + diphosphate + H(+). The chain is Phenylalanine--tRNA ligase alpha subunit from Klebsiella pneumoniae (strain 342).